The chain runs to 137 residues: Chaperone protein YscB (137 aa).

Interacts with SycN to form a complex which specifically binds to YopN.

The protein localises to the cytoplasm. The protein resides in the cell inner membrane. Its function is as follows. Functions as a specific chaperone for YopN. It could facilitate the secretion and the subsequent translocation of YopN. The polypeptide is Chaperone protein YscB (yscB) (Yersinia pestis).